Consider the following 250-residue polypeptide: UPF0736 protein BLi01230/BL03322 (250 aa).

It belongs to the UPF0736 family.

The sequence is that of UPF0736 protein BLi01230/BL03322 from Bacillus licheniformis (strain ATCC 14580 / DSM 13 / JCM 2505 / CCUG 7422 / NBRC 12200 / NCIMB 9375 / NCTC 10341 / NRRL NRS-1264 / Gibson 46).